The following is a 646-amino-acid chain: Lipoteichoic acid synthase (646 aa).

The Cytoplasmic segment spans residues 1 to 7; it reads MSLPKKK. Residues 8-28 traverse the membrane as a helical segment; it reads IGIFAFFLLTVFTITLKTYFS. The Extracellular segment spans residues 29–43; it reads YYVDFSLGVKGLVQN. The chain crosses the membrane as a helical span at residues 44 to 64; that stretch reads LILLMNPYSLIALVLSVFLFF. Residues 65 to 68 are Cytoplasmic-facing; sequence KGKK. The chain crosses the membrane as a helical span at residues 69 to 89; it reads AFWFIFIGGFLLTFLLYANVV. Topologically, residues 90–119 are extracellular; it reads YFRFFSDFLTFSTLNQAGNVESMGGAVSAS. A helical membrane pass occupies residues 120 to 140; sequence FKWYDFVYFIDTIIYLAILIF. Residues 141–153 lie on the Cytoplasmic side of the membrane; it reads KRKWLDNRAFSKK. Residues 154–174 form a helical membrane-spanning segment; that stretch reads FVPVVMATSVALFFLNLAFAE. Topologically, residues 175 to 646 are extracellular; the sequence is TDRPELLTRT…KSGPKGNEKK (472 aa). Residues Glu255 and Thr300 each contribute to the Mn(2+) site. Residue Thr300 is part of the active site. His416 provides a ligand contact to substrate. Positions 475 and 476 each coordinate Mn(2+).

The protein belongs to the LTA synthase family. Post-translationally, proteolytically cleaved.

The protein resides in the cell membrane. The protein localises to the secreted. Its pathway is cell wall biogenesis; lipoteichoic acid biosynthesis. Its function is as follows. Catalyzes the polymerization of lipoteichoic acid (LTA) polyglycerol phosphate, a reaction that presumably uses phosphatidylglycerol (PG) as substrate. Is required for staphylococcal growth and cell division process. The sequence is that of Lipoteichoic acid synthase (ltaS) from Staphylococcus epidermidis (strain ATCC 35984 / DSM 28319 / BCRC 17069 / CCUG 31568 / BM 3577 / RP62A).